Reading from the N-terminus, the 39-residue chain is Pro-opiomelanocortin (39 aa).

Serine 1 bears the N-acetylserine mark. The residue at position 13 (valine 13) is a Valine amide. Serine 31 carries the phosphoserine modification.

Belongs to the POMC family. Expressed in the pituitary gland.

The protein resides in the secreted. Functionally, precursor protein for pituitary hormones that regulate stress and environmental adaptation. In terms of biological role, stimulates the adrenal glands to release cortisol. Its function is as follows. Anorexigenic peptide. Increases the pigmentation of skin by increasing melanin production in melanocytes. In Oryctolagus cuniculus (Rabbit), this protein is Pro-opiomelanocortin (POMC).